Consider the following 310-residue polypeptide: Homoserine kinase (310 aa).

Pro-91 to Cys-101 lines the ATP pocket.

This sequence belongs to the GHMP kinase family. Homoserine kinase subfamily.

Its subcellular location is the cytoplasm. It carries out the reaction L-homoserine + ATP = O-phospho-L-homoserine + ADP + H(+). Its pathway is amino-acid biosynthesis; L-threonine biosynthesis; L-threonine from L-aspartate: step 4/5. Functionally, catalyzes the ATP-dependent phosphorylation of L-homoserine to L-homoserine phosphate. This chain is Homoserine kinase, found in Escherichia coli (strain SE11).